The sequence spans 445 residues: uncharacterized protein (445 aa).

A run of 8 helical transmembrane segments spans residues 16 to 36 (IVSLGVTASSFLFINGVAFLI), 52 to 72 (LLASMPSWGLVVTMFAWGYLL), 98 to 118 (VHSLLWIGVFLFLGGMAAGGC), 168 to 188 (GLMFPAVVCTLAAVASVLGIV), 219 to 239 (ASALLMMPQTVTVTFMLVWLI), 243 to 263 (GWSVAQAGVLVTISQLLGALG), 283 to 303 (LIAAAAAATLFLLAAVDNEGS), and 366 to 386 (AAYPTAWALCGVFPLAAVPLV). The tract at residues 417 to 445 (AWPNGPRRPGPPGQPRRVRQGGTAITPPT) is disordered.

Belongs to the major facilitator superfamily.

The protein resides in the cell membrane. This is an uncharacterized protein from Mycobacterium tuberculosis (strain ATCC 25618 / H37Rv).